We begin with the raw amino-acid sequence, 271 residues long: MINGETKIYGIIGNPVKHSLSPIMHNALFKKFGINAIYVPFEVKKDLKNAINGVKALDIQGVNVTMPYKEEVIKFLDELSEDSQNIGSVNTVVNLEGKLVGYTTDGIGARRALERFTQVDGANILILGAGGAGKAIAYELSKVANVVVLNRTIEKAKRLEKFGIVGDSLEALPYYVEWADILINATSVGMNEEKSLVPKNLLRPGLVVMDIVYKPLNTLLLRYAQEKGCIAIDGLWMLVYQGAESFRLWTGEEGDVELMRRVALAWLRERK.

Shikimate-binding positions include 19-21 and T65; that span reads SLS. The active-site Proton acceptor is K69. E81 serves as a coordination point for NADP(+). Shikimate-binding residues include N90 and D105. NADP(+) is bound by residues 128 to 132, 150 to 155, and I211; these read GAGGA and NRTIEK. Shikimate is bound at residue Y213. G234 contacts NADP(+).

This sequence belongs to the shikimate dehydrogenase family. As to quaternary structure, homodimer.

The catalysed reaction is shikimate + NADP(+) = 3-dehydroshikimate + NADPH + H(+). It participates in metabolic intermediate biosynthesis; chorismate biosynthesis; chorismate from D-erythrose 4-phosphate and phosphoenolpyruvate: step 4/7. Its function is as follows. Involved in the biosynthesis of the chorismate, which leads to the biosynthesis of aromatic amino acids. Catalyzes the reversible NADPH linked reduction of 3-dehydroshikimate (DHSA) to yield shikimate (SA). The protein is Shikimate dehydrogenase (NADP(+)) of Pyrococcus furiosus (strain ATCC 43587 / DSM 3638 / JCM 8422 / Vc1).